The chain runs to 427 residues: Glutamate-1-semialdehyde 2,1-aminomutase (427 aa).

N6-(pyridoxal phosphate)lysine is present on Lys-265.

This sequence belongs to the class-III pyridoxal-phosphate-dependent aminotransferase family. HemL subfamily. In terms of assembly, homodimer. Requires pyridoxal 5'-phosphate as cofactor.

It localises to the cytoplasm. The enzyme catalyses (S)-4-amino-5-oxopentanoate = 5-aminolevulinate. The protein operates within porphyrin-containing compound metabolism; protoporphyrin-IX biosynthesis; 5-aminolevulinate from L-glutamyl-tRNA(Glu): step 2/2. This Colwellia psychrerythraea (strain 34H / ATCC BAA-681) (Vibrio psychroerythus) protein is Glutamate-1-semialdehyde 2,1-aminomutase.